A 157-amino-acid chain; its full sequence is MSKQPQQRYAEAIVNRKARHEFEIIETFVAGIQLAGSEVKSVRLGQASLNESFAIILRNEVWLENMQITPYKHNRMEVLEAKRSRKLLLHKKEIAKLQAKVSEKGLTLVPLKAFFTPHGLLKIELAIARGKKLYDKRETLKNRENQRHLDQLRKQYS.

It belongs to the SmpB family.

It localises to the cytoplasm. Functionally, required for rescue of stalled ribosomes mediated by trans-translation. Binds to transfer-messenger RNA (tmRNA), required for stable association of tmRNA with ribosomes. tmRNA and SmpB together mimic tRNA shape, replacing the anticodon stem-loop with SmpB. tmRNA is encoded by the ssrA gene; the 2 termini fold to resemble tRNA(Ala) and it encodes a 'tag peptide', a short internal open reading frame. During trans-translation Ala-aminoacylated tmRNA acts like a tRNA, entering the A-site of stalled ribosomes, displacing the stalled mRNA. The ribosome then switches to translate the ORF on the tmRNA; the nascent peptide is terminated with the 'tag peptide' encoded by the tmRNA and targeted for degradation. The ribosome is freed to recommence translation, which seems to be the essential function of trans-translation. This Chlorobium chlorochromatii (strain CaD3) protein is SsrA-binding protein.